The primary structure comprises 61 residues: UPF0434 protein Sama_1339 (61 aa).

The protein belongs to the UPF0434 family.

This Shewanella amazonensis (strain ATCC BAA-1098 / SB2B) protein is UPF0434 protein Sama_1339.